Here is a 422-residue protein sequence, read N- to C-terminus: Protein IQ-DOMAIN 5 (422 aa).

The Nuclear localization signal signature appears at 23 to 30 (SKKDENVK). 3 consecutive IQ domains span residues 87–115 (ENRAATRIQTAYRGFLARRALRALKGLVR), 116–138 (LQALVRGHAVRKQAAVTLRCMQA), and 139–164 (LVRVQARVRARRVRLALELESETSQQ). Residues 137–151 (QALVRVQARVRARRV) form a calmodulin-binding region. Positions 269-422 (GENGMEQSEN…NSDPIKQRLA (154 aa)) are disordered. Positions 273-308 (MEQSENVPKTQIKSVSKMPNTSNLVSGVSSQMTGPC) are enriched in polar residues. The span at 310–327 (SDGDSSSPGISSSIPVVS) shows a compositional bias: low complexity. Residues 355 to 371 (NPKERSREPNRSSKERL) show a composition bias toward basic and acidic residues. The span at 373-387 (LPNSGKSLGSQSTKA) shows a compositional bias: polar residues. Over residues 412 to 422 (RNSDPIKQRLA) the composition is skewed to basic and acidic residues.

Belongs to the IQD family. In terms of assembly, binds to multiple calmodulin (CaM) in the presence of Ca(2+) and CaM-like proteins. In terms of tissue distribution, expressed mostly in vegetative tissues including older parts of the root, cotyledons, leaves and shoot apical meristems (SAM). Present at low levels in pollen, siliques and seeds.

Its subcellular location is the nucleus. The protein resides in the cytoplasm. It localises to the cytoskeleton. It is found in the spindle. The protein localises to the phragmoplast. In terms of biological role, may be involved in cooperative interactions with calmodulins or calmodulin-like proteins. Recruits calmodulin (CaM) calcium sensor proteins to cortical microtubule arrays, thus being a potential scaffold in cellular signaling and trafficking. Binds to microtubules (MTs) and promotes MT assembly and dynamics to modulate pavement cell (PC) morphogenesis via cellulose deposition-dependent anisotropic cell expansion triggered by cellulose synthase complexes (CSCs). May associate with nucleic acids and regulate gene expression at the transcriptional or post-transcriptional level. The sequence is that of Protein IQ-DOMAIN 5 from Arabidopsis thaliana (Mouse-ear cress).